Here is a 347-residue protein sequence, read N- to C-terminus: MNTNDFDFELPEELIAQTPLEQRDASKLLVIDPVTREMTDTHFDHIIDQLNPGDALVMNNTRVLPARLYGEKTDTHGHVEFLLLKNTQGDQWEVLAKPAKRLKVGAKVSFGDGRLTATVTKELDHGGRIVEFSYDGIFLEVLESLGEMPLPPYIHEKLEDRDRYQTVYAKENGSAAAPTAGLHFTPELLQKIEAKGVKLVYLTLHVGLGTFRPVSVDNVDEHEMHSEFYTLSQEAADTLNSVKAAGGRIVAVGTTSIRTLETIGNKYDGQLQADSGWTNIFIKPGYQFTVVDAFSTNFHLPKSTLVMLVSAFAGREFVLEAYKHAVQERYRFFSFGDAMFVTRPSEK.

Belongs to the QueA family. In terms of assembly, monomer.

Its subcellular location is the cytoplasm. The enzyme catalyses 7-aminomethyl-7-carbaguanosine(34) in tRNA + S-adenosyl-L-methionine = epoxyqueuosine(34) in tRNA + adenine + L-methionine + 2 H(+). It functions in the pathway tRNA modification; tRNA-queuosine biosynthesis. Functionally, transfers and isomerizes the ribose moiety from AdoMet to the 7-aminomethyl group of 7-deazaguanine (preQ1-tRNA) to give epoxyqueuosine (oQ-tRNA). The protein is S-adenosylmethionine:tRNA ribosyltransferase-isomerase of Streptococcus thermophilus (strain ATCC BAA-491 / LMD-9).